A 1048-amino-acid polypeptide reads, in one-letter code: [F-actin]-monooxygenase MICAL1 (1048 aa).

A monooxygenase domain region spans residues 1–489 (MASPASTNPA…QDLYDMMDKE (489 aa)). FAD is bound by residues Cys-95, 114 to 116 (EKR), 121 to 123 (RHN), Phe-181, Tyr-293, and Asp-393. The residue at position 475 (Thr-475) is a Phosphothreonine. The span at 488-502 (KEHAQRKSDEPDSRK) shows a compositional bias: basic and acidic residues. A disordered region spans residues 488-508 (KEHAQRKSDEPDSRKTTTGSA). The region spanning 507-611 (SAGTEELLHW…YLSHFHSAFK (105 aa)) is the Calponin-homology (CH) domain. Ser-616 is modified (phosphoserine). The tract at residues 643 to 676 (TRAKVDEETPSTEEPPVSEPSMSPNTPELSEHQE) is disordered. A compositionally biased stretch (low complexity) spans 654–666 (TEEPPVSEPSMSP). Residues 681–743 (ELCELCGKHL…LQHLPQEDQK (63 aa)) form the LIM zinc-binding domain. Zn(2+) is bound by residues Cys-683, Cys-686, His-704, Cys-707, Cys-710, Cys-713, Cys-733, and His-736. Disordered regions lie at residues 741–787 (DQKE…QPAR), 805–825 (IIPD…SDLA), and 839–873 (PVQA…PPLE). Positions 747–765 (NNGSLESQELPTPGDSNMQ) are enriched in polar residues. Positions 772–787 (PVTRVSPVPSPSQPAR) are enriched in low complexity. Ser-777 and Ser-781 each carry phosphoserine. Coiled-coil stretches lie at residues 847-867 (EAIE…EEEE), 906-949 (EEEM…ESSS), and 974-1031 (EEAE…VNQR). Over residues 852–868 (GDDEEEEEEEEEEEEEP) the composition is skewed to acidic residues. Residues 905–1048 (KEEEMKRFCK…EERRLREMPA (144 aa)) form the bMERB domain.

The protein belongs to the Mical family. As to quaternary structure, associates with the SH3 domain of NEDD9. Interacts with VIM and PLXNA3. Interacts with RAB1B, RAB8A, RAB10, RAB13 and RAB15 (in their GTP-bound forms); binding to RAB1B is of low affinity compared to other Rab proteins; at least in case of RAB8A and RAB10 can bind 2 molecules of the Rab proteins simultaneously. Interacts with STK38 and STK38L. Interacts with GRAF1/ARHGAP26, GRAF2/ARHGAP10, RAB8A, RAB8B and RAB10; may bind simultaneously to GRAFs and Rabs and connects GRAFs to Rabs. Does not interact with RAB1 and RAB11A. Requires FAD as cofactor. As to expression, expressed in the postnatal and adult hippocampus; found in dentate gyrus, the polymorphic layer, cornu ammonis (CA) 1-3 and in mossy fibers of the striatum lucidum. In adult hippocampus strongly expressed in CA3 pyramidial neurons.

Its subcellular location is the cytoplasm. It is found in the cytoskeleton. The protein localises to the endosome membrane. It localises to the midbody. The catalysed reaction is L-methionyl-[F-actin] + NADPH + O2 + H(+) = L-methionyl-(R)-S-oxide-[F-actin] + NADP(+) + H2O. It carries out the reaction NADPH + O2 + H(+) = H2O2 + NADP(+). Monooxygenase that promotes depolymerization of F-actin by mediating oxidation of specific methionine residues on actin to form methionine-sulfoxide, resulting in actin filament disassembly and preventing repolymerization. In the absence of actin, it also functions as a NADPH oxidase producing H(2)O(2). Acts as a cytoskeletal regulator that connects NEDD9 to intermediate filaments. Also acts as a negative regulator of apoptosis via its interaction with STK38 and STK38L; acts by antagonizing STK38 and STK38L activation by MST1/STK4. Involved in regulation of lamina-specific connectivity in the nervous system such as the development of lamina-restricted hippocampal connections. Through redox regulation of the actin cytoskeleton controls the intracellular distribution of secretory vesicles containing L1/neurofascin/NgCAM family proteins in neurons, thereby regulating their cell surface levels. May act as Rab effector protein and play a role in vesicle trafficking. Promotes endosomal tubule extension by associating with RAB8 (RAB8A or RAB8B), RAB10 and GRAF (GRAF1/ARHGAP26 or GRAF2/ARHGAP10) on the endosomal membrane which may connect GRAFs to Rabs, thereby participating in neosynthesized Rab8-Rab10-Rab11-dependent protein export. The protein is [F-actin]-monooxygenase MICAL1 (Mical1) of Mus musculus (Mouse).